Reading from the N-terminus, the 192-residue chain is Cytidylate kinase (192 aa).

Residue 7 to 15 (GPPGAGKST) coordinates ATP.

The protein belongs to the cytidylate kinase family. Type 2 subfamily.

The protein localises to the cytoplasm. The catalysed reaction is CMP + ATP = CDP + ADP. It catalyses the reaction dCMP + ATP = dCDP + ADP. The sequence is that of Cytidylate kinase from Haloquadratum walsbyi (strain DSM 16790 / HBSQ001).